The chain runs to 294 residues: Small ribosomal subunit protein uS2 (294 aa).

Over residues Met261–Glu274 the composition is skewed to basic and acidic residues. Residues Met261–Glu294 are disordered.

It belongs to the universal ribosomal protein uS2 family.

The chain is Small ribosomal subunit protein uS2 from Leptospira borgpetersenii serovar Hardjo-bovis (strain JB197).